The chain runs to 1155 residues: DNA-directed RNA polymerase subunit beta (1155 aa).

It belongs to the RNA polymerase beta chain family. In terms of assembly, the RNAP catalytic core consists of 2 alpha, 1 beta, 1 beta' and 1 omega subunit. When a sigma factor is associated with the core the holoenzyme is formed, which can initiate transcription.

It carries out the reaction RNA(n) + a ribonucleoside 5'-triphosphate = RNA(n+1) + diphosphate. Functionally, DNA-dependent RNA polymerase catalyzes the transcription of DNA into RNA using the four ribonucleoside triphosphates as substrates. The sequence is that of DNA-directed RNA polymerase subunit beta from Borreliella afzelii (strain PKo) (Borrelia afzelii).